We begin with the raw amino-acid sequence, 116 residues long: MNLITTIIAITITLSAVLATISFWLPQMTPDAEKLSPYECGFDPLGSARLPFSLRFFLIAILFLLFDLEIALLLPLPWGDQLTTPALTLAWSAAVLALLTLGLIYEWTQGGLEWAE.

3 helical membrane passes run 3-23 (LITT…TISF), 56-76 (FFLI…LLPL), and 85-105 (PALT…GLIY).

This sequence belongs to the complex I subunit 3 family.

Its subcellular location is the mitochondrion membrane. It catalyses the reaction a ubiquinone + NADH + 5 H(+)(in) = a ubiquinol + NAD(+) + 4 H(+)(out). Its function is as follows. Core subunit of the mitochondrial membrane respiratory chain NADH dehydrogenase (Complex I) that is believed to belong to the minimal assembly required for catalysis. Complex I functions in the transfer of electrons from NADH to the respiratory chain. The immediate electron acceptor for the enzyme is believed to be ubiquinone. The protein is NADH-ubiquinone oxidoreductase chain 3 (MT-ND3) of Salmo salar (Atlantic salmon).